Reading from the N-terminus, the 104-residue chain is Large ribosomal subunit protein bL21c (104 aa).

Belongs to the bacterial ribosomal protein bL21 family. Part of the 50S ribosomal subunit.

Its subcellular location is the plastid. The protein resides in the cyanelle. In terms of biological role, this protein binds to 23S rRNA. In Cyanophora paradoxa, this protein is Large ribosomal subunit protein bL21c.